Consider the following 460-residue polypeptide: Arginine decarboxylase (460 aa).

Lysine 226 bears the N6-(pyridoxal phosphate)lysine mark.

The protein belongs to the Orn/Lys/Arg decarboxylase class-I family. Pyridoxal 5'-phosphate is required as a cofactor.

Its subcellular location is the cytoplasm. It carries out the reaction L-arginine + H(+) = agmatine + CO2. Its pathway is amine and polyamine biosynthesis; agmatine biosynthesis; agmatine from L-arginine: step 1/1. Its function is as follows. Catalyzes the formation of agmatine from arginine. This is Arginine decarboxylase (speA) from Bacillus cereus (strain ATCC 14579 / DSM 31 / CCUG 7414 / JCM 2152 / NBRC 15305 / NCIMB 9373 / NCTC 2599 / NRRL B-3711).